The primary structure comprises 117 residues: Large ribosomal subunit protein bL19 (117 aa).

Belongs to the bacterial ribosomal protein bL19 family.

Its function is as follows. This protein is located at the 30S-50S ribosomal subunit interface and may play a role in the structure and function of the aminoacyl-tRNA binding site. This chain is Large ribosomal subunit protein bL19, found in Shewanella halifaxensis (strain HAW-EB4).